A 1405-amino-acid chain; its full sequence is DNA-directed RNA polymerase III subunit rpc1 (1405 aa).

Zn(2+)-binding residues include cysteine 66, cysteine 69, cysteine 76, histidine 79, cysteine 106, cysteine 109, and cysteine 153. Residues aspartate 493, aspartate 495, and aspartate 497 each contribute to the Mg(2+) site. The interval 838–850 (PTEFLFHAISGRE) is bridging helix.

The protein belongs to the RNA polymerase beta' chain family. As to quaternary structure, component of the RNA polymerase III (Pol III) complex consisting of 17 subunits.

The protein resides in the nucleus. It carries out the reaction RNA(n) + a ribonucleoside 5'-triphosphate = RNA(n+1) + diphosphate. Functionally, DNA-dependent RNA polymerase catalyzes the transcription of DNA into RNA using the four ribonucleoside triphosphates as substrates. Largest and catalytic core component of RNA polymerase III which synthesizes small RNAs, such as 5S rRNA and tRNAs. Forms the polymerase active center together with the second largest subunit. A single-stranded DNA template strand of the promoter is positioned within the central active site cleft of Pol III. A bridging helix emanates from RPC1 and crosses the cleft near the catalytic site and is thought to promote translocation of Pol III by acting as a ratchet that moves the RNA-DNA hybrid through the active site by switching from straight to bent conformations at each step of nucleotide addition. The polypeptide is DNA-directed RNA polymerase III subunit rpc1 (rpc1) (Schizosaccharomyces pombe (strain 972 / ATCC 24843) (Fission yeast)).